A 316-amino-acid polypeptide reads, in one-letter code: Ribose-phosphate pyrophosphokinase (316 aa).

ATP is bound by residues D41–E43 and R100–Q101. Residues H134 and D175 each coordinate Mg(2+). The active site involves K198. Residues R200, D224, and D228 to S232 contribute to the D-ribose 5-phosphate site.

The protein belongs to the ribose-phosphate pyrophosphokinase family. Class I subfamily. In terms of assembly, homohexamer. Mg(2+) is required as a cofactor.

It localises to the cytoplasm. The enzyme catalyses D-ribose 5-phosphate + ATP = 5-phospho-alpha-D-ribose 1-diphosphate + AMP + H(+). It functions in the pathway metabolic intermediate biosynthesis; 5-phospho-alpha-D-ribose 1-diphosphate biosynthesis; 5-phospho-alpha-D-ribose 1-diphosphate from D-ribose 5-phosphate (route I): step 1/1. Involved in the biosynthesis of the central metabolite phospho-alpha-D-ribosyl-1-pyrophosphate (PRPP) via the transfer of pyrophosphoryl group from ATP to 1-hydroxyl of ribose-5-phosphate (Rib-5-P). The protein is Ribose-phosphate pyrophosphokinase of Thermosipho africanus (strain TCF52B).